The chain runs to 258 residues: Ubiquinone/menaquinone biosynthesis C-methyltransferase UbiE (258 aa).

Residues 1 to 20 (MSESRTSADGGMETSYGFRE) are disordered. Residues T81, D102, and 130-131 (NA) each bind S-adenosyl-L-methionine.

This sequence belongs to the class I-like SAM-binding methyltransferase superfamily. MenG/UbiE family.

The enzyme catalyses a 2-demethylmenaquinol + S-adenosyl-L-methionine = a menaquinol + S-adenosyl-L-homocysteine + H(+). It carries out the reaction a 2-methoxy-6-(all-trans-polyprenyl)benzene-1,4-diol + S-adenosyl-L-methionine = a 5-methoxy-2-methyl-3-(all-trans-polyprenyl)benzene-1,4-diol + S-adenosyl-L-homocysteine + H(+). The protein operates within quinol/quinone metabolism; menaquinone biosynthesis; menaquinol from 1,4-dihydroxy-2-naphthoate: step 2/2. It functions in the pathway cofactor biosynthesis; ubiquinone biosynthesis. In terms of biological role, methyltransferase required for the conversion of demethylmenaquinol (DMKH2) to menaquinol (MKH2) and the conversion of 2-polyprenyl-6-methoxy-1,4-benzoquinol (DDMQH2) to 2-polyprenyl-3-methyl-6-methoxy-1,4-benzoquinol (DMQH2). The chain is Ubiquinone/menaquinone biosynthesis C-methyltransferase UbiE from Rhizobium etli (strain ATCC 51251 / DSM 11541 / JCM 21823 / NBRC 15573 / CFN 42).